A 459-amino-acid polypeptide reads, in one-letter code: ATP-dependent 6-phosphofructokinase (459 aa).

ATP-binding positions include glycine 89, 154–155 (RG), and 179–182 (GDGG). Residue aspartate 180 coordinates Mg(2+). Substrate is bound by residues 208-210 (TID), 253-255 (MGR), glutamate 309, and 368-371 (YAIR). Aspartate 210 functions as the Proton acceptor in the catalytic mechanism.

The protein belongs to the phosphofructokinase type A (PFKA) family. PPi-dependent PFK group II subfamily. Atypical ATP-dependent clade 'X' sub-subfamily. As to quaternary structure, homodimer. Requires Mg(2+) as cofactor.

The protein resides in the cytoplasm. The enzyme catalyses beta-D-fructose 6-phosphate + ATP = beta-D-fructose 1,6-bisphosphate + ADP + H(+). It functions in the pathway carbohydrate degradation; glycolysis; D-glyceraldehyde 3-phosphate and glycerone phosphate from D-glucose: step 3/4. AMP causes 20-40% inhibition and diphosphate causes 20-50% inhibition. ADP, citrate, PEP and FBP have no effect. Catalyzes the phosphorylation of D-fructose 6-phosphate to fructose 1,6-bisphosphate by ATP, the first committing step of glycolysis. This chain is ATP-dependent 6-phosphofructokinase, found in Amycolatopsis methanolica.